The sequence spans 258 residues: 14-3-3-like protein F (258 aa).

This sequence belongs to the 14-3-3 family.

The polypeptide is 14-3-3-like protein F (Nicotiana tabacum (Common tobacco)).